A 342-amino-acid chain; its full sequence is Methylthioribose-1-phosphate isomerase (342 aa).

Substrate-binding positions include 49-51 (RGA), Arg-86, and Gln-187. Asp-228 serves as the catalytic Proton donor. Substrate is bound at residue 238 to 239 (NK).

The protein belongs to the eIF-2B alpha/beta/delta subunits family. MtnA subfamily.

The catalysed reaction is 5-(methylsulfanyl)-alpha-D-ribose 1-phosphate = 5-(methylsulfanyl)-D-ribulose 1-phosphate. Its pathway is amino-acid biosynthesis; L-methionine biosynthesis via salvage pathway; L-methionine from S-methyl-5-thio-alpha-D-ribose 1-phosphate: step 1/6. Its function is as follows. Catalyzes the interconversion of methylthioribose-1-phosphate (MTR-1-P) into methylthioribulose-1-phosphate (MTRu-1-P). The protein is Methylthioribose-1-phosphate isomerase of Klebsiella pneumoniae subsp. pneumoniae (strain ATCC 700721 / MGH 78578).